Here is a 274-residue protein sequence, read N- to C-terminus: NAD kinase (274 aa).

The Proton acceptor role is filled by Asp-59. Residues 59–60, 133–134, Arg-144, Asp-163, 174–179, and Gln-233 contribute to the NAD(+) site; these read DG, ND, and TAYALS.

This sequence belongs to the NAD kinase family. The cofactor is a divalent metal cation.

Its subcellular location is the cytoplasm. It catalyses the reaction NAD(+) + ATP = ADP + NADP(+) + H(+). Functionally, involved in the regulation of the intracellular balance of NAD and NADP, and is a key enzyme in the biosynthesis of NADP. Catalyzes specifically the phosphorylation on 2'-hydroxyl of the adenosine moiety of NAD to yield NADP. This chain is NAD kinase, found in Aquifex aeolicus (strain VF5).